The primary structure comprises 155 residues: FAD synthase (155 aa).

ATP is bound by residues 9 to 10 (TF), 14 to 17 (HPGH), and D92.

It belongs to the archaeal FAD synthase family. Homodimer. It depends on a divalent metal cation as a cofactor.

The enzyme catalyses FMN + ATP + H(+) = FAD + diphosphate. It functions in the pathway cofactor biosynthesis; FAD biosynthesis; FAD from FMN: step 1/1. In terms of biological role, catalyzes the transfer of the AMP portion of ATP to flavin mononucleotide (FMN) to produce flavin adenine dinucleotide (FAD) coenzyme. This chain is FAD synthase, found in Archaeoglobus profundus (strain DSM 5631 / JCM 9629 / NBRC 100127 / Av18).